The following is a 76-amino-acid chain: Putative small nuclear ribonucleoprotein G-like protein 15 (76 aa).

Positions 4-76 (AHPPELKKFT…IIMLEALERV (73 aa)) constitute a Sm domain.

The protein belongs to the snRNP Sm proteins family.

It localises to the nucleus. In terms of biological role, associated with snRNP U1, U2, U4/U6 and U5. This Homo sapiens (Human) protein is Putative small nuclear ribonucleoprotein G-like protein 15 (SNRPGP15).